The following is a 242-amino-acid chain: Anthranilate phosphoribosyltransferase (242 aa).

Residues Gly-79, 82-83 (GD), Thr-87, 89-92 (NVST), 107-115 (KHGNRAVSS), and Ser-119 contribute to the 5-phospho-alpha-D-ribose 1-diphosphate site. Anthranilate is bound at residue Gly-79. Residue Ser-91 participates in Mg(2+) binding. Asn-110 serves as a coordination point for anthranilate. An anthranilate-binding site is contributed by Arg-165. Asp-224 and Glu-225 together coordinate Mg(2+).

The protein belongs to the anthranilate phosphoribosyltransferase family. In terms of assembly, homodimer. Mg(2+) is required as a cofactor.

The catalysed reaction is N-(5-phospho-beta-D-ribosyl)anthranilate + diphosphate = 5-phospho-alpha-D-ribose 1-diphosphate + anthranilate. It functions in the pathway amino-acid biosynthesis; L-tryptophan biosynthesis; L-tryptophan from chorismate: step 2/5. In terms of biological role, catalyzes the transfer of the phosphoribosyl group of 5-phosphorylribose-1-pyrophosphate (PRPP) to anthranilate to yield N-(5'-phosphoribosyl)-anthranilate (PRA). This is Anthranilate phosphoribosyltransferase (trpD) from Bacillus caldotenax.